The chain runs to 388 residues: Chorismate synthase (388 aa).

NADP(+) is bound by residues Arg-39 and Arg-45. Residues 130–132 (RSS), 251–252 (NA), Gly-296, 311–315 (KPIPT), and Arg-337 each bind FMN.

It belongs to the chorismate synthase family. In terms of assembly, homotetramer. It depends on FMNH2 as a cofactor.

It catalyses the reaction 5-O-(1-carboxyvinyl)-3-phosphoshikimate = chorismate + phosphate. The protein operates within metabolic intermediate biosynthesis; chorismate biosynthesis; chorismate from D-erythrose 4-phosphate and phosphoenolpyruvate: step 7/7. Functionally, catalyzes the anti-1,4-elimination of the C-3 phosphate and the C-6 proR hydrogen from 5-enolpyruvylshikimate-3-phosphate (EPSP) to yield chorismate, which is the branch point compound that serves as the starting substrate for the three terminal pathways of aromatic amino acid biosynthesis. This reaction introduces a second double bond into the aromatic ring system. This is Chorismate synthase from Streptococcus pyogenes serotype M49 (strain NZ131).